A 1403-amino-acid chain; its full sequence is Baculoviral IAP repeat-containing protein 1e (1403 aa).

BIR repeat units follow at residues 60–127 (EAKR…CEFL), 159–227 (EEAR…CEFL), and 278–345 (EELR…CVFL). The Zn(2+) site is built by cysteine 315, cysteine 318, histidine 335, and cysteine 342. The region spanning 464 to 759 (SVMCVEGETG…EFLAAVRLTE (296 aa)) is the NACHT domain. 473–478 (GSGKTT) lines the ATP pocket.

Component of the NLRC4 inflammasome, at least composed of NLRC4, caspase-1 (CASP1) and some NAIP protein. Flagellin binding by NAIP5 triggers assembly of the inflammasome, a huge complex that contains a single NAIP5 chain and multiple copies of NLRC4. As to quaternary structure, (Microbial infection) Interacts with S.typhimurium (Salmonella) flagellin. In terms of assembly, (Microbial infection) Interacts with L.pneumophila flagellin. As to expression, detected in macrophages (at protein level).

Sensor component of the NLRC4 inflammasome that specifically recognizes and binds flagellin from pathogenic bacteria such as Legionella or Salmonella. Association of pathogenic bacteria proteins drives in turn drive assembly and activation of the NLRC4 inflammasome, promoting caspase-1 activation, cytokine production and macrophage pyroptosis. The NLRC4 inflammasome is activated as part of the innate immune response to a range of intracellular bacteria. The NLRC4 inflammasome senses Gram-negative bacteria such as L.pneumophila and P.aeruginosa, enteric pathogens S.typhimurium (Salmonella) and S.flexneri. May contribute to prevent motor-neuron apoptosis induced by a variety of signals. This Mus musculus (Mouse) protein is Baculoviral IAP repeat-containing protein 1e.